The following is a 245-amino-acid chain: Biosynthetic peptidoglycan transglycosylase (245 aa).

A helical transmembrane segment spans residues 13-35 (VGLARWIVYAGSVFAGAWLATQL).

The protein belongs to the glycosyltransferase 51 family.

It is found in the cell inner membrane. It catalyses the reaction [GlcNAc-(1-&gt;4)-Mur2Ac(oyl-L-Ala-gamma-D-Glu-L-Lys-D-Ala-D-Ala)](n)-di-trans,octa-cis-undecaprenyl diphosphate + beta-D-GlcNAc-(1-&gt;4)-Mur2Ac(oyl-L-Ala-gamma-D-Glu-L-Lys-D-Ala-D-Ala)-di-trans,octa-cis-undecaprenyl diphosphate = [GlcNAc-(1-&gt;4)-Mur2Ac(oyl-L-Ala-gamma-D-Glu-L-Lys-D-Ala-D-Ala)](n+1)-di-trans,octa-cis-undecaprenyl diphosphate + di-trans,octa-cis-undecaprenyl diphosphate + H(+). The protein operates within cell wall biogenesis; peptidoglycan biosynthesis. Its function is as follows. Peptidoglycan polymerase that catalyzes glycan chain elongation from lipid-linked precursors. The polypeptide is Biosynthetic peptidoglycan transglycosylase (Burkholderia vietnamiensis (strain G4 / LMG 22486) (Burkholderia cepacia (strain R1808))).